Consider the following 166-residue polypeptide: Regulatory protein RecX (166 aa).

Belongs to the RecX family.

It is found in the cytoplasm. Functionally, modulates RecA activity. This Escherichia coli (strain K12 / MC4100 / BW2952) protein is Regulatory protein RecX.